The primary structure comprises 136 residues: Small ribosomal subunit protein bS6 (136 aa).

The tract at residues 96 to 136 (VTEPSALARSGSDAEADRAPADEGSVEAAGAEPGSEAEAEA) is disordered.

It belongs to the bacterial ribosomal protein bS6 family.

Binds together with bS18 to 16S ribosomal RNA. In Methylococcus capsulatus (strain ATCC 33009 / NCIMB 11132 / Bath), this protein is Small ribosomal subunit protein bS6.